A 748-amino-acid chain; its full sequence is MAGFKRGYDGKIAGLYDLDKTLGRGHFAVVKLARHVFTGEKVAVKVIDKTKLDTLATGHLFQEVRCMKLVQHPNIVRLYEVIDTQTKLYLILELGDGGDMFDYIMKHEEGLNEDLAKKYFAQIVHAISYCHKLHVVHRDLKPENVVFFEKQGLVKLTDFGFSNKFQPGKKLTTSCGSLAYSAPEILLGDEYDAPAVDIWSLGVILFMLVCGQPPFQEANDSETLTMIMDCKYTVPPRVSAGCRDLITRMLQRDPKRRASLEEIESHPWLQGVDPSPATKYNIPLVSYKNLSEEEHNSIIQRMVLGDIADRDAIVEALETNRYNHITATYFLLAERILREKQEKEIQTRSASPSNIKAQFRQSWPTKIDVPQDLEDDLTATPLSHATVPQSPARAGDNVLNGHRSKGLCDPAKKDELPELAGPALSTVPPASMKPAASGRKCLFRVEEDEEEDEEDKKPVSLSTQVVLRRKPSVTNRLTSRKSAPVLNQIFEEGESDDEFDMDENLPPKLSRLKMNIASPGTVHKRYHRRKSQGRGSSCSSSETSDDDSESRRRLDKDSGFAYSWHRRDSSEGPPGSEGDGGGQSKPSSGGGVDKASPGEQGTGGGSQGGSGGTPSGTAGSSRRCAGPDSSSPSPASASAAPRGAELVQSLKLVSLCLGSQLHGAKYILDPQKALFSSVKVQEKSTWKMCISAPGPSPSADLDPVRTKKLRNNALQLPLCEKTISVNIQRSRKEGLLCASSPASCCHVI.

Residues 16 to 269 form the Protein kinase domain; it reads YDLDKTLGRG…LEEIESHPWL (254 aa). ATP contacts are provided by residues 22–30 and K45; that span reads LGRGHFAVV. The active-site Proton acceptor is the D139. Phosphoserine is present on S162. T173 carries the post-translational modification Phosphothreonine; by LKB1. One can recognise a UBA domain in the interval 291-334; sequence SEEEHNSIIQRMVLGDIADRDAIVEALETNRYNHITATYFLLAE. Phosphoserine occurs at positions 362, 390, 482, 495, and 518. The interval 383-415 is disordered; that stretch reads SHATVPQSPARAGDNVLNGHRSKGLCDPAKKDE. Positions 491–503 are enriched in acidic residues; it reads EEGESDDEFDMDE. Positions 491-640 are disordered; the sequence is EEGESDDEFD…SPSPASASAA (150 aa). Residues 522–532 are compositionally biased toward basic residues; it reads VHKRYHRRKSQ. A compositionally biased stretch (low complexity) spans 533–542; sequence GRGSSCSSSE. R534 is modified (omega-N-methylarginine). Residues 549–558 show a composition bias toward basic and acidic residues; it reads ESRRRLDKDS. Gly residues-rich tracts occupy residues 575 to 592 and 600 to 614; these read GSEGDGGGQSKPSSGGGV and QGTGGGSQGGSGGTP. Position 606 is a phosphoserine (S606). Residues 629 to 640 show a composition bias toward low complexity; sequence SSSPSPASASAA.

Belongs to the protein kinase superfamily. CAMK Ser/Thr protein kinase family. Mg(2+) serves as cofactor. In terms of processing, autophosphorylated. Phosphorylation on Thr-173 by STK11/LKB1 in complex with STE20-related adapter-alpha (STRADA) pseudo kinase and CAB39. Ubiquitously expressed in all tissues examined.

It is found in the nucleus. It catalyses the reaction L-seryl-[protein] + ATP = O-phospho-L-seryl-[protein] + ADP + H(+). The enzyme catalyses L-threonyl-[protein] + ATP = O-phospho-L-threonyl-[protein] + ADP + H(+). Activated by phosphorylation on Thr-173. Its function is as follows. May play a role in hematopoietic cell proliferation or differentiation. Potential mediator of neuronal apoptosis. In Mus musculus (Mouse), this protein is SNF-related serine/threonine-protein kinase.